Consider the following 1415-residue polypeptide: DNA-directed RNA polymerase subunit beta' (1415 aa).

4 residues coordinate Zn(2+): Cys214, Cys294, Cys301, and Cys304. A compositionally biased stretch (polar residues) spans 1335–1351 (QNFVDSQGKPQSQSSFI). The segment at 1335–1390 (QNFVDSQGKPQSQSSFIDDSMSEFSPVKDKSGSVLDDSDFPPGNFDSDFPADNYDL) is disordered.

The protein belongs to the RNA polymerase beta' chain family. RpoC2 subfamily. As to quaternary structure, in cyanobacteria the RNAP catalytic core is composed of 2 alpha, 1 beta, 1 beta', 1 gamma and 1 omega subunit. When a sigma factor is associated with the core the holoenzyme is formed, which can initiate transcription. The cofactor is Zn(2+).

It carries out the reaction RNA(n) + a ribonucleoside 5'-triphosphate = RNA(n+1) + diphosphate. Functionally, DNA-dependent RNA polymerase catalyzes the transcription of DNA into RNA using the four ribonucleoside triphosphates as substrates. The sequence is that of DNA-directed RNA polymerase subunit beta' from Trichodesmium erythraeum (strain IMS101).